A 294-amino-acid chain; its full sequence is tRNA pseudouridine synthase B (294 aa).

Asp39 serves as the catalytic Nucleophile.

Belongs to the pseudouridine synthase TruB family. Type 1 subfamily.

The enzyme catalyses uridine(55) in tRNA = pseudouridine(55) in tRNA. Its function is as follows. Responsible for synthesis of pseudouridine from uracil-55 in the psi GC loop of transfer RNAs. The chain is tRNA pseudouridine synthase B from Streptococcus pyogenes serotype M2 (strain MGAS10270).